A 216-amino-acid chain; its full sequence is MTKKYSLGFVGRKAGMSRVFTEDGRSVPVTLIEATPNRIAQIKTVEVDGYSAVQVTVGARRAALVNKPAAGHFAKAKVEAGRGLWEFRVEDAQLGDFAVGGEIKADIFEVGQKVDVQGVTKGKGFQGTIKRYNFRMGDATHGNSLSHRAPGSLGQRQTPGRVFPGKKMSGHMGAVQQSTQNLEVVKVDVERGLIAIRGAVPGAAGGDVIVRPASKA.

Glutamine 157 carries the post-translational modification N5-methylglutamine.

It belongs to the universal ribosomal protein uL3 family. Part of the 50S ribosomal subunit. Forms a cluster with proteins L14 and L19. In terms of processing, methylated by PrmB.

Functionally, one of the primary rRNA binding proteins, it binds directly near the 3'-end of the 23S rRNA, where it nucleates assembly of the 50S subunit. The sequence is that of Large ribosomal subunit protein uL3 from Xanthomonas axonopodis pv. citri (strain 306).